A 167-amino-acid polypeptide reads, in one-letter code: Crossover junction endodeoxyribonuclease RuvC (167 aa).

Catalysis depends on residues D14, E75, and D147. Residues D14, E75, and D147 each contribute to the Mg(2+) site.

The protein belongs to the RuvC family. In terms of assembly, homodimer which binds Holliday junction (HJ) DNA. The HJ becomes 2-fold symmetrical on binding to RuvC with unstacked arms; it has a different conformation from HJ DNA in complex with RuvA. In the full resolvosome a probable DNA-RuvA(4)-RuvB(12)-RuvC(2) complex forms which resolves the HJ. Mg(2+) is required as a cofactor.

The protein resides in the cytoplasm. It catalyses the reaction Endonucleolytic cleavage at a junction such as a reciprocal single-stranded crossover between two homologous DNA duplexes (Holliday junction).. Functionally, the RuvA-RuvB-RuvC complex processes Holliday junction (HJ) DNA during genetic recombination and DNA repair. Endonuclease that resolves HJ intermediates. Cleaves cruciform DNA by making single-stranded nicks across the HJ at symmetrical positions within the homologous arms, yielding a 5'-phosphate and a 3'-hydroxyl group; requires a central core of homology in the junction. The consensus cleavage sequence is 5'-(A/T)TT(C/G)-3'. Cleavage occurs on the 3'-side of the TT dinucleotide at the point of strand exchange. HJ branch migration catalyzed by RuvA-RuvB allows RuvC to scan DNA until it finds its consensus sequence, where it cleaves and resolves the cruciform DNA. The protein is Crossover junction endodeoxyribonuclease RuvC of Synechocystis sp. (strain ATCC 27184 / PCC 6803 / Kazusa).